A 104-amino-acid polypeptide reads, in one-letter code: Large ribosomal subunit protein bL21 (104 aa).

This sequence belongs to the bacterial ribosomal protein bL21 family. In terms of assembly, part of the 50S ribosomal subunit. Contacts protein L20.

Functionally, this protein binds to 23S rRNA in the presence of protein L20. The protein is Large ribosomal subunit protein bL21 of Helicobacter pylori (strain P12).